The chain runs to 86 residues: Protein Tat (86 aa).

The disordered stretch occupies residues 1-21 (MDPVDPNIEPWNHPGSQPKTA). The interval 1–24 (MDPVDPNIEPWNHPGSQPKTACNR) is interaction with human CREBBP. The transactivation stretch occupies residues 1-48 (MDPVDPNIEPWNHPGSQPKTACNRCHCKKCCYHCQVCFITKGLGISYG). Cys-22, Cys-25, and Cys-27 together coordinate Zn(2+). Positions 22–37 (CNRCHCKKCCYHCQVC) are cysteine-rich. Lys-28 is modified (N6-acetyllysine; by host PCAF). Cys-30, His-33, Cys-34, and Cys-37 together coordinate Zn(2+). The core stretch occupies residues 38–48 (FITKGLGISYG). Positions 47 to 86 (YGRKKRRQRRRPSQGGQTHQDPIPKQPSSQPRGDPTGPKE) are disordered. Basic residues predominate over residues 48-58 (GRKKRRQRRRP). A Nuclear localization signal, RNA-binding (TAR), and protein transduction motif is present at residues 49 to 57 (RKKRRQRRR). The segment at 49 to 86 (RKKRRQRRRPSQGGQTHQDPIPKQPSSQPRGDPTGPKE) is interaction with the host capping enzyme RNGTT. Residues Lys-50 and Lys-51 each carry the N6-acetyllysine; by host EP300 and GCN5L2 modification. Arg-52 and Arg-53 each carry asymmetric dimethylarginine; by host PRMT6. Positions 60 to 77 (QGGQTHQDPIPKQPSSQP) are enriched in polar residues. Residue Lys-71 forms a Glycyl lysine isopeptide (Lys-Gly) (interchain with G-Cter in ubiquitin) linkage. A Cell attachment site motif is present at residues 78 to 80 (RGD).

Belongs to the lentiviruses Tat family. As to quaternary structure, interacts with host CCNT1. Associates with the P-TEFb complex composed at least of Tat, P-TEFb (CDK9 and CCNT1), TAR RNA, RNA Pol II. Recruits the HATs CREBBP, TAF1/TFIID, EP300, PCAF and GCN5L2. Interacts with host KAT5/Tip60; this interaction targets the latter to degradation. Interacts with the host deacetylase SIRT1. Interacts with host capping enzyme RNGTT; this interaction stimulates RNGTT. Binds to host KDR, and to the host integrins ITGAV/ITGB3 and ITGA5/ITGB1. Interacts with host KPNB1/importin beta-1 without previous binding to KPNA1/importin alpha-1. Interacts with EIF2AK2. Interacts with host nucleosome assembly protein NAP1L1; this interaction may be required for the transport of Tat within the nucleus, since the two proteins interact at the nuclear rim. Interacts with host C1QBP/SF2P32; this interaction involves lysine-acetylated Tat. Interacts with the host chemokine receptors CCR2, CCR3 and CXCR4. Interacts with host DPP4/CD26; this interaction may trigger an anti-proliferative effect. Interacts with host LDLR. Interacts with the host extracellular matrix metalloproteinase MMP1. Interacts with host PRMT6; this interaction mediates Tat's methylation. Interacts with, and is ubiquitinated by MDM2/Hdm2. Interacts with host PSMC3 and HTATIP2. Interacts with STAB1; this interaction may overcome SATB1-mediated repression of IL2 and IL2RA (interleukin) in T cells by binding to the same domain than HDAC1. Interacts (when acetylated) with human CDK13, thereby increasing HIV-1 mRNA splicing and promoting the production of the doubly spliced HIV-1 protein Nef. Interacts with host TBP; this interaction modulates the activity of transcriptional pre-initiation complex. Interacts with host RELA. Interacts with host PLSCR1; this interaction negatively regulates Tat transactivation activity by altering its subcellular distribution. In terms of processing, asymmetrical arginine methylation by host PRMT6 seems to diminish the transactivation capacity of Tat and affects the interaction with host CCNT1. Post-translationally, acetylation by EP300, CREBBP, GCN5L2/GCN5 and PCAF regulates the transactivation activity of Tat. EP300-mediated acetylation of Lys-50 promotes dissociation of Tat from the TAR RNA through the competitive binding to PCAF's bromodomain. In addition, the non-acetylated Tat's N-terminus can also interact with PCAF. PCAF-mediated acetylation of Lys-28 enhances Tat's binding to CCNT1. Lys-50 is deacetylated by SIRT1. Polyubiquitination by host MDM2 does not target Tat to degradation, but activates its transactivation function and fosters interaction with CCNT1 and TAR RNA. In terms of processing, phosphorylated by EIF2AK2 on serine and threonine residues adjacent to the basic region important for TAR RNA binding and function. Phosphorylation of Tat by EIF2AK2 is dependent on the prior activation of EIF2AK2 by dsRNA.

Its subcellular location is the host nucleus. The protein resides in the host nucleolus. It is found in the host cytoplasm. The protein localises to the secreted. In terms of biological role, transcriptional activator that increases RNA Pol II processivity, thereby increasing the level of full-length viral transcripts. Recognizes a hairpin structure at the 5'-LTR of the nascent viral mRNAs referred to as the transactivation responsive RNA element (TAR) and recruits the cyclin T1-CDK9 complex (P-TEFb complex) that will in turn hyperphosphorylate the RNA polymerase II to allow efficient elongation. The CDK9 component of P-TEFb and other Tat-activated kinases hyperphosphorylate the C-terminus of RNA Pol II that becomes stabilized and much more processive. Other factors such as HTATSF1/Tat-SF1, SUPT5H/SPT5, and HTATIP2 are also important for Tat's function. Besides its effect on RNA Pol II processivity, Tat induces chromatin remodeling of proviral genes by recruiting the histone acetyltransferases (HATs) CREBBP, EP300 and PCAF to the chromatin. This also contributes to the increase in proviral transcription rate, especially when the provirus integrates in transcriptionally silent region of the host genome. To ensure maximal activation of the LTR, Tat mediates nuclear translocation of NF-kappa-B by interacting with host RELA. Through its interaction with host TBP, Tat may also modulate transcription initiation. Tat can reactivate a latently infected cell by penetrating in it and transactivating its LTR promoter. In the cytoplasm, Tat is thought to act as a translational activator of HIV-1 mRNAs. Functionally, extracellular circulating Tat can be endocytosed by surrounding uninfected cells via the binding to several surface receptors such as CD26, CXCR4, heparan sulfate proteoglycans (HSPG) or LDLR. Neurons are rarely infected, but they internalize Tat via their LDLR. Through its interaction with nuclear HATs, Tat is potentially able to control the acetylation-dependent cellular gene expression. Modulates the expression of many cellular genes involved in cell survival, proliferation or in coding for cytokines or cytokine receptors. Tat plays a role in T-cell and neurons apoptosis. Tat induced neurotoxicity and apoptosis probably contribute to neuroAIDS. Circulating Tat also acts as a chemokine-like and/or growth factor-like molecule that binds to specific receptors on the surface of the cells, affecting many cellular pathways. In the vascular system, Tat binds to ITGAV/ITGB3 and ITGA5/ITGB1 integrins dimers at the surface of endothelial cells and competes with bFGF for heparin-binding sites, leading to an excess of soluble bFGF. The polypeptide is Protein Tat (Human immunodeficiency virus type 1 group M subtype D (isolate Z2/CDC-Z34) (HIV-1)).